A 155-amino-acid chain; its full sequence is 2-C-methyl-D-erythritol 2,4-cyclodiphosphate synthase (155 aa).

2 residues coordinate a divalent metal cation: Asp9 and His11. 4-CDP-2-C-methyl-D-erythritol 2-phosphate is bound by residues 9–11 and 35–36; these read DSH and HS. His43 lines the a divalent metal cation pocket. 4-CDP-2-C-methyl-D-erythritol 2-phosphate is bound at residue 57-59; it reads DIG.

It belongs to the IspF family. Homotrimer. The cofactor is a divalent metal cation.

The enzyme catalyses 4-CDP-2-C-methyl-D-erythritol 2-phosphate = 2-C-methyl-D-erythritol 2,4-cyclic diphosphate + CMP. Its pathway is isoprenoid biosynthesis; isopentenyl diphosphate biosynthesis via DXP pathway; isopentenyl diphosphate from 1-deoxy-D-xylulose 5-phosphate: step 4/6. Functionally, involved in the biosynthesis of isopentenyl diphosphate (IPP) and dimethylallyl diphosphate (DMAPP), two major building blocks of isoprenoid compounds. Catalyzes the conversion of 4-diphosphocytidyl-2-C-methyl-D-erythritol 2-phosphate (CDP-ME2P) to 2-C-methyl-D-erythritol 2,4-cyclodiphosphate (ME-CPP) with a corresponding release of cytidine 5-monophosphate (CMP). The chain is 2-C-methyl-D-erythritol 2,4-cyclodiphosphate synthase from Koribacter versatilis (strain Ellin345).